A 358-amino-acid polypeptide reads, in one-letter code: Endo-1,4-beta-xylanase B (358 aa).

A signal peptide spans 1–17 (MRFSASLLLALTGSAAA). A GH10 domain is found at 40–352 (QGLDAAMKAA…KAAYNAFLRG (313 aa)). N-linked (GlcNAc...) asparagine glycosylation is present at asparagine 136. Glutamate 166 serves as the catalytic Proton donor. Residue glutamate 274 is the Nucleophile of the active site.

The protein belongs to the glycosyl hydrolase 10 (cellulase F) family.

It is found in the secreted. It catalyses the reaction Endohydrolysis of (1-&gt;4)-beta-D-xylosidic linkages in xylans.. Its pathway is glycan degradation; xylan degradation. Its activity is regulated as follows. Partial inhibition of activity is detected in the presence of Ag(+), Cu2(+) and SDS. Like most fungal xylanases, activity is completely inhibited by Hg(2+) since Hg(2+) could interact with tryptophan residues and oxidize the indole ring. Beta-mercaptoethanol enhances the enzymatic activity by counteracting the oxidation effects of the S-S linkage between cysteine residues. Endo-1,4-beta-xylanase involved in the hydrolysis of xylan, a major structural heterogeneous polysaccharide found in plant biomass representing the second most abundant polysaccharide in the biosphere, after cellulose. Is more active on soluble wheat arabinoxylan (defined as 100%) than on birchwood xylan (75.4%) and beechwood xylan (70.8%), and less active on insoluble wheat arabinoxylan (17.4%). Xylose is the major hydrolysis product of XynB. This is Endo-1,4-beta-xylanase B from Humicola insolens (Soft-rot fungus).